Consider the following 116-residue polypeptide: Protein TCL1B1 (116 aa).

Belongs to the TCL1 family.

The polypeptide is Protein TCL1B1 (Tcl1b1) (Mus musculus (Mouse)).